The sequence spans 423 residues: Histidine--tRNA ligase (423 aa).

This sequence belongs to the class-II aminoacyl-tRNA synthetase family. In terms of assembly, homodimer.

It is found in the cytoplasm. The catalysed reaction is tRNA(His) + L-histidine + ATP = L-histidyl-tRNA(His) + AMP + diphosphate + H(+). In Anoxybacillus flavithermus (strain DSM 21510 / WK1), this protein is Histidine--tRNA ligase.